Reading from the N-terminus, the 370-residue chain is Cathepsin B-like cysteine proteinase 3 (370 aa).

The signal sequence occupies residues 1–16; sequence MLKVYFLALFLAGCSA. Positions 17–91 are excised as a propeptide; sequence FVLDEIRGIN…FVRGEIVPEP (75 aa). Intrachain disulfides connect Cys105-Cys134, Cys117-Cys162, Cys153-Cys210, Cys154-Cys158, Cys190-Cys214, and Cys198-Cys202. Residue Cys120 is part of the active site. Asn138 carries an N-linked (GlcNAc...) asparagine glycan. Active-site residues include His284 and Asn304.

This sequence belongs to the peptidase C1 family.

This chain is Cathepsin B-like cysteine proteinase 3 (cpr-3), found in Caenorhabditis elegans.